Here is a 341-residue protein sequence, read N- to C-terminus: Outer membrane protein U (341 aa).

The signal sequence occupies residues methionine 1 to alanine 21.

Belongs to the Gram-negative porin family. As to quaternary structure, homotrimer.

The protein resides in the cell outer membrane. Its function is as follows. Forms pores that allow passive diffusion of small molecules across the outer membrane. The sequence is that of Outer membrane protein U (ompU) from Vibrio cholerae serotype O1 (strain ATCC 39315 / El Tor Inaba N16961).